The following is a 434-amino-acid chain: Nicotinate phosphoribosyltransferase (434 aa).

The residue at position 242 (histidine 242) is a Phosphohistidine; by autocatalysis.

The protein belongs to the NAPRTase family. Transiently phosphorylated on a His residue during the reaction cycle. Phosphorylation strongly increases the affinity for substrates and increases the rate of nicotinate D-ribonucleotide production. Dephosphorylation regenerates the low-affinity form of the enzyme, leading to product release.

The enzyme catalyses nicotinate + 5-phospho-alpha-D-ribose 1-diphosphate + ATP + H2O = nicotinate beta-D-ribonucleotide + ADP + phosphate + diphosphate. The protein operates within cofactor biosynthesis; NAD(+) biosynthesis; nicotinate D-ribonucleotide from nicotinate: step 1/1. Catalyzes the synthesis of beta-nicotinate D-ribonucleotide from nicotinate and 5-phospho-D-ribose 1-phosphate at the expense of ATP. In Agrobacterium fabrum (strain C58 / ATCC 33970) (Agrobacterium tumefaciens (strain C58)), this protein is Nicotinate phosphoribosyltransferase.